Reading from the N-terminus, the 187-residue chain is uncharacterized protein (187 aa).

Positions 42-63 are disordered; the sequence is RTNGPGKDSFSFSTSGSKPSSS. A compositionally biased stretch (low complexity) spans 50–63; it reads SFSFSTSGSKPSSS.

This is an uncharacterized protein from Saccharomyces cerevisiae (strain ATCC 204508 / S288c) (Baker's yeast).